We begin with the raw amino-acid sequence, 104 residues long: SOSS complex subunit C (104 aa).

Position 2 is an N-acetylalanine (Ala2). Ser50 is subject to Phosphoserine.

This sequence belongs to the SOSS-C family. As to quaternary structure, component of the SOSS complex, composed of SOSS-B (SOSS-B1/NABP2 or SOSS-B2/NABP1), SOSS-A/INTS3 and SOSS-C/INIP. SOSS complexes containing SOSS-B1/NABP2 are more abundant than complexes containing SOSS-B2/NABP1. Interacts with INTS3; the interaction is direct.

Its subcellular location is the nucleus. Its function is as follows. Component of the SOSS complex, a multiprotein complex that functions downstream of the MRN complex to promote DNA repair and G2/M checkpoint. The SOSS complex associates with single-stranded DNA at DNA lesions and influences diverse endpoints in the cellular DNA damage response including cell-cycle checkpoint activation, recombinational repair and maintenance of genomic stability. Required for efficient homologous recombination-dependent repair of double-strand breaks (DSBs) and ATM-dependent signaling pathways. This chain is SOSS complex subunit C (Inip), found in Mus musculus (Mouse).